Consider the following 236-residue polypeptide: Transmembrane protein 70 homolog, mitochondrial (236 aa).

The transit peptide at 1 to 64 (MLGLRAMLPK…WLSVKSTKTE (64 aa)) directs the protein to the mitochondrion. Helical transmembrane passes span 83–103 (MVKF…PILL) and 116–136 (VFLC…LHFI).

The protein belongs to the TMEM70 family. Associates with mitochondrial complex I assembly intermediates during its biogenesis.

The protein resides in the mitochondrion membrane. Scaffold protein that participates in the c-ring assembly of mitochondrial ATP synthase (F(1)F(0) ATP synthase or complex V). Also binds the mitochondrial proton-transporting ATP synthase complex I and may play a role in the stability of its membrane-bound subassemblies. The sequence is that of Transmembrane protein 70 homolog, mitochondrial from Drosophila melanogaster (Fruit fly).